Here is a 270-residue protein sequence, read N- to C-terminus: Thiazole synthase (270 aa).

The active-site Schiff-base intermediate with DXP is K111. 1-deoxy-D-xylulose 5-phosphate is bound by residues G172, 198-199 (AG), and 220-221 (NT).

It belongs to the ThiG family. In terms of assembly, homotetramer. Forms heterodimers with either ThiH or ThiS.

The protein resides in the cytoplasm. It catalyses the reaction [ThiS sulfur-carrier protein]-C-terminal-Gly-aminoethanethioate + 2-iminoacetate + 1-deoxy-D-xylulose 5-phosphate = [ThiS sulfur-carrier protein]-C-terminal Gly-Gly + 2-[(2R,5Z)-2-carboxy-4-methylthiazol-5(2H)-ylidene]ethyl phosphate + 2 H2O + H(+). It participates in cofactor biosynthesis; thiamine diphosphate biosynthesis. Its function is as follows. Catalyzes the rearrangement of 1-deoxy-D-xylulose 5-phosphate (DXP) to produce the thiazole phosphate moiety of thiamine. Sulfur is provided by the thiocarboxylate moiety of the carrier protein ThiS. In vitro, sulfur can be provided by H(2)S. This Methylococcus capsulatus (strain ATCC 33009 / NCIMB 11132 / Bath) protein is Thiazole synthase.